Consider the following 130-residue polypeptide: Small ribosomal subunit protein uS8 (130 aa).

It belongs to the universal ribosomal protein uS8 family. As to quaternary structure, part of the 30S ribosomal subunit. Contacts proteins S5 and S12.

One of the primary rRNA binding proteins, it binds directly to 16S rRNA central domain where it helps coordinate assembly of the platform of the 30S subunit. The sequence is that of Small ribosomal subunit protein uS8 from Tolumonas auensis (strain DSM 9187 / NBRC 110442 / TA 4).